Consider the following 331-residue polypeptide: Glycerophosphodiester phosphodiesterase 1 (331 aa).

At 1–3 (MWL) the chain is on the cytoplasmic side. The helical transmembrane segment at 4 to 24 (WEDQGGLLGPFSFVLVLLLVV) threads the bilayer. Topologically, residues 25–248 (TRSPFNACVL…PRYSVFWKQS (224 aa)) are lumenal. The GP-PDE domain maps to 65–331 (VSAIAHRGGS…SMLEDCAPHF (267 aa)). The Mg(2+) site is built by E97 and D99. Residue N168 is glycosylated (N-linked (GlcNAc...) asparagine). D174 serves as a coordination point for Mg(2+). A helical membrane pass occupies residues 249 to 269 (VFVVLDILLDWSMHNVLWYLC). The Cytoplasmic segment spans residues 270 to 331 (GISAFLMQKD…SMLEDCAPHF (62 aa)).

This sequence belongs to the glycerophosphoryl diester phosphodiesterase family. As to quaternary structure, interacts with PRAF2. Interacts with RGS16. Mg(2+) is required as a cofactor. Post-translationally, N-glycosylated. As to expression, detected in heart, brain, lung, liver, skeletal muscle, kidney, pituitary and testis.

The protein resides in the cell membrane. It localises to the cytoplasmic vesicle membrane. The catalysed reaction is sn-glycero-3-phospho-1D-myo-inositol + H2O = myo-inositol + sn-glycerol 3-phosphate + H(+). It carries out the reaction 1-O-(1Z-octadecenyl)-sn-glycero-3-phospho-(N-5Z,8Z,11Z,14Z-eicosatetraenoyl)-ethanolamine + H2O = 1-O-(1Z-octadecenyl)-sn-glycero-3-phosphate + N-(5Z,8Z,11Z,14Z-eicosatetraenoyl)-ethanolamine + H(+). The enzyme catalyses 1-O-(1Z-octadecenyl)-sn-glycero-3-phospho-(N-9Z-octadecenoyl)-ethanolamine + H2O = 1-O-(1Z-octadecenyl)-sn-glycero-3-phosphate + N-(9Z-octadecenoyl) ethanolamine + H(+). It catalyses the reaction 1-O-(1Z-octadecenyl)-sn-glycero-3-phospho-N-hexadecanoyl-ethanolamine + H2O = 1-O-(1Z-octadecenyl)-sn-glycero-3-phosphate + N-hexadecanoylethanolamine + H(+). The catalysed reaction is N-(4Z,7Z,10Z,13Z,16Z,19Z)-docosahexaenoyl-sn-glycero-3-phosphoethanolamine + H2O = N-(4Z,7Z,10Z,13Z,16Z,19Z)-docosahexaenoyl ethanolamine + sn-glycerol 3-phosphate + H(+). It carries out the reaction N-eicosanoyl-sn-glycero-3-phosphoethanolamine + H2O = N-eicosanoyl ethanolamine + sn-glycerol 3-phosphate + H(+). The enzyme catalyses N-hexadecanoyl-sn-glycero-3-phosphoethanolamine + H2O = N-hexadecanoylethanolamine + sn-glycerol 3-phosphate + H(+). It catalyses the reaction N-(9Z-octadecenoyl)-sn-glycero-3-phosphoethanolamine + H2O = N-(9Z-octadecenoyl) ethanolamine + sn-glycerol 3-phosphate + H(+). The catalysed reaction is N-(5Z,8Z,11Z,14Z-eicosatetraenoyl)-sn-glycero-3-phosphoethanolamine + H2O = N-(5Z,8Z,11Z,14Z-eicosatetraenoyl)-ethanolamine + sn-glycerol 3-phosphate + H(+). With respect to regulation, inhibited by EDTA, calcium chloride, and zinc chloride. Enhanced by magnesium chloride. Glycerophosphodiester phosphodiesterase activity can be modulated by G-protein signaling pathways. In terms of biological role, hydrolyzes the phosphodiester bond of glycerophosphodiesters such as glycerophosphoinositol (GroPIns) and glycerophosphoethanolamine (GroPEth), to yield a glycerol phosphate and an alcohol. Hydrolyzes glycerophospho-N-acylethanolamines to N-acylethanolamines in the brain and participates in bioactive N-acylethanolamine biosynthesis such as anandamide (an endocannabinoid), N-palmitoylethanolamine (an anti-inflammatory), and N-oleoylethanolamine (an anorexic). In addition, has a lysophospholipase D activity by hydrolyzing N-acyl-lysoplasmenylethanolamine (N-acyl-lysoPlsEt) to N-acylethanolamine. However lysophospholipase D activity is lower than glycerophosphodiester phosphodiesterase activity. Has little or no activity towards glycerophosphocholine. In Rattus norvegicus (Rat), this protein is Glycerophosphodiester phosphodiesterase 1.